We begin with the raw amino-acid sequence, 200 residues long: Holliday junction resolvase RecU (200 aa).

The segment at 1-25 is disordered; it reads MTIRYPNGKRYNQASQPQKTPIKTH. The span at 10 to 25 shows a compositional bias: polar residues; it reads RYNQASQPQKTPIKTH. Mg(2+)-binding residues include threonine 85, aspartate 87, glutamate 100, and glutamine 119.

The protein belongs to the RecU family. Mg(2+) serves as cofactor.

The protein localises to the cytoplasm. The enzyme catalyses Endonucleolytic cleavage at a junction such as a reciprocal single-stranded crossover between two homologous DNA duplexes (Holliday junction).. In terms of biological role, endonuclease that resolves Holliday junction intermediates in genetic recombination. Cleaves mobile four-strand junctions by introducing symmetrical nicks in paired strands. Promotes annealing of linear ssDNA with homologous dsDNA. Required for DNA repair, homologous recombination and chromosome segregation. In Bacillus cereus (strain G9842), this protein is Holliday junction resolvase RecU.